A 587-amino-acid polypeptide reads, in one-letter code: Phosphatidylinositol-3-phosphatase SAC1 (587 aa).

Residues 1–520 (MAATAYEHLK…SPLSVPRDWK (520 aa)) lie on the Cytoplasmic side of the membrane. The region spanning 122–451 (LNHVLSTDGF…ANACAKQYAG (330 aa)) is the SAC domain. Residues 452–587 (TGALKTDFTR…PRLVQKEKID (136 aa)) form an essential for phosphatidylinositol-4-phosphate phosphatase activity region. An N6-acetyllysine modification is found at Lys456. A helical transmembrane segment spans residues 521–541 (FLALPIIMVVAFSMCIICLLM). Topologically, residues 542–548 (AGDTWTE) are lumenal. Residues 549–569 (TLAYVLFWGVASIGTFFIILY) form a helical membrane-spanning segment. Residues 570 to 587 (NGKDFVDAPRLVQKEKID) are Cytoplasmic-facing.

Interacts with TMEM39A. Interacts with SEC23A and SEC24A; this interaction is reduced in the absence of TMEM39A. Interacts with PLEKHA3 and VAPA and/or VAPB to form a ternary complex. In terms of tissue distribution, detected in spleen, lung, liver, skeletal muscle, kidney, testis and in cerebellar Purkinje cells (at protein level). Ubiquitous. Highly expressed in brain, spleen, liver and kidney.

It localises to the endoplasmic reticulum membrane. It is found in the golgi apparatus membrane. The catalysed reaction is a 1,2-diacyl-sn-glycero-3-phospho-(1D-myo-inositol-3-phosphate) + H2O = a 1,2-diacyl-sn-glycero-3-phospho-(1D-myo-inositol) + phosphate. The enzyme catalyses a 1,2-diacyl-sn-glycero-3-phospho-(1D-myo-inositol 4-phosphate) + H2O = a 1,2-diacyl-sn-glycero-3-phospho-(1D-myo-inositol) + phosphate. Functionally, phosphoinositide phosphatase which catalyzes the hydrolysis of phosphatidylinositol 4-phosphate (PtdIns(4)P), phosphatidylinositol 3-phosphate (PtdIns(3)P) and has low activity towards phosphatidylinositol-3,5-bisphosphate (PtdIns(3,5)P2). Shows a very robust PtdIns(4)P phosphatase activity when it binds PtdIns(4)P in a 'cis' configuration in the cellular environment, with much less activity seen when it binds PtdIns(4)P in 'trans' configuration. PtdIns(4)P phosphatase activity (when it binds PtdIns(4)P in 'trans' configuration) is enhanced in the presence of PLEKHA3. The protein is Phosphatidylinositol-3-phosphatase SAC1 (Sacm1l) of Rattus norvegicus (Rat).